A 575-amino-acid chain; its full sequence is MSGNSEGLLESSGGGVGGSVEEEKDMKMEETGEGAGSGGNRWPRPETLALLRIRSEMDKAFRDSTLKAPLWEEISRKMMELGYKRSSKKCKEKFENVYKYHKRTKEGRTGKSEGKTYRFFEELEAFETLSSYQPEPESQPAKSSAVITNAPATSSLIPWISSSNPSTEKSSSPLKHHHQVSVQPITTNPTFLAKQPSSTTPFPFYSSNNTTTVSQPPISNDLMNNVSSLNLFSSSTSSSTASDEEEDHHQVKSSRKKRKYWKGLFTKLTKELMEKQEKMQKRFLETLEYREKERISREEAWRVQEIGRINREHETLIHERSNAAAKDAAIISFLHKISGGQPQQPQQHNHKPSQRKQYQSDHSITFESKEPRAVLLDTTIKMGNYDNNHSVSPSSSRWPKTEVEALIRIRKNLEANYQENGTKGPLWEEISAGMRRLGYNRSAKRCKEKWENINKYFKKVKESNKKRPLDSKTCPYFHQLEALYNERNKSGAMPLPLPLMVTPQRQLLLSQETQTEFETDQREKVGDKEDEEEGESEEDEYDEEEEGEGDNETSEFEIVLNKTSSPMDINNNLFT.

Over residues 1-11 the composition is skewed to low complexity; that stretch reads MSGNSEGLLES. Disordered regions lie at residues 1–44, 157–181, 232–256, and 339–364; these read MSGN…RWPR, IPWISSSNPSTEKSSSPLKHHHQVS, FSSSTSSSTASDEEEDHHQVKSSRK, and GGQPQQPQQHNHKPSQRKQYQSDHSI. The Myb-like 1 domain occupies 40–98; sequence NRWPRPETLALLRIRSEMDKAFRDSTLKAPLWEEISRKMMELGYKRSSKKCKEKFENVY. Composition is skewed to low complexity over residues 161-172 and 232-241; these read SSSNPSTEKSSS and FSSSTSSSTA. Over residues 355–364 the composition is skewed to polar residues; the sequence is RKQYQSDHSI. The Myb-like 2 domain maps to 390–454; the sequence is SVSPSSSRWP…RCKEKWENIN (65 aa). The segment at 513-575 is disordered; that stretch reads TQTEFETDQR…PMDINNNLFT (63 aa). Acidic residues predominate over residues 528–555; sequence KEDEEEGESEEDEYDEEEEGEGDNETSE. A compositionally biased stretch (polar residues) spans 561–575; that stretch reads NKTSSPMDINNNLFT.

The protein localises to the nucleus. Functionally, probable transcription factor that binds specific DNA sequence. This is Trihelix transcription factor GT-2 (GT-2) from Arabidopsis thaliana (Mouse-ear cress).